The chain runs to 66 residues: Alpha-bisabolene synthase (66 aa).

Belongs to the terpene synthase family. Tpsd subfamily. Requires Mn(2+) as cofactor. It depends on K(+) as a cofactor.

The protein localises to the cytoplasm. The catalysed reaction is (2E,6E)-farnesyl diphosphate = (E,R)-alpha-bisabolene + diphosphate. The protein operates within terpene metabolism; oleoresin biosynthesis. Its function is as follows. Involved in defensive oleoresin formation in conifers in response to insect attack or other injury. Involved in sesquiterpene (C15) olefins biosynthesis. This Pseudotsuga menziesii (Douglas-fir) protein is Alpha-bisabolene synthase.